Consider the following 447-residue polypeptide: Tubulin beta-2 chain (447 aa).

Residues Gln-11, Glu-69, Ser-138, Gly-142, Thr-143, Gly-144, Asn-204, and Asn-226 each coordinate GTP. Glu-69 contacts Mg(2+). The interval 426–447 (QDAGVDEEEEEYEDDAPLEEEV) is disordered. Positions 429-447 (GVDEEEEEYEDDAPLEEEV) are enriched in acidic residues.

Belongs to the tubulin family. Dimer of alpha and beta chains. A typical microtubule is a hollow water-filled tube with an outer diameter of 25 nm and an inner diameter of 15 nM. Alpha-beta heterodimers associate head-to-tail to form protofilaments running lengthwise along the microtubule wall with the beta-tubulin subunit facing the microtubule plus end conferring a structural polarity. Microtubules usually have 13 protofilaments but different protofilament numbers can be found in some organisms and specialized cells. It depends on Mg(2+) as a cofactor.

Its subcellular location is the cytoplasm. The protein localises to the cytoskeleton. Tubulin is the major constituent of microtubules, a cylinder consisting of laterally associated linear protofilaments composed of alpha- and beta-tubulin heterodimers. Microtubules grow by the addition of GTP-tubulin dimers to the microtubule end, where a stabilizing cap forms. Below the cap, tubulin dimers are in GDP-bound state, owing to GTPase activity of alpha-tubulin. This Colletotrichum graminicola (Maize anthracnose fungus) protein is Tubulin beta-2 chain (TUB2).